The sequence spans 2201 residues: Activating signal cointegrator 1 complex subunit 3 (2201 aa).

S12 carries the post-translational modification Phosphoserine. Coiled-coil stretches lie at residues 18–81 (KQDN…KQIV) and 328–356 (IQSE…KAGE). One can recognise a Helicase ATP-binding 1 domain in the interval 486-669 (ETAYNTNENM…FLHVNPCIGL (184 aa)). Position 499-506 (499-506 (APTGAGKT)) interacts with ATP. At K572 the chain carries N6-acetyllysine. The short motif at 611–614 (DEVH) is the DEVH box element. The region spanning 696–914 (QLNNMDEVCY…GTVTNVEEAV (219 aa)) is the Helicase C-terminal 1 domain. The SEC63 1 domain occupies 978 to 1287 (STDLGRTASH…GAEAVCIINF (310 aa)). The Helicase ATP-binding 2 domain maps to 1336–1511 (HTLYHTDCNV…WLNIRQMGLF (176 aa)). An ATP-binding site is contributed by 1349-1356 (APTGSGKT). The DEIH box motif lies at 1453–1456 (DEIH). The Helicase C-terminal 2 domain maps to 1544–1739 (PTFQAIRSHS…VLSDHLNAEI (196 aa)). The region spanning 1812–2176 (PLTYGRIASY…LGLDQQYDIH (365 aa)) is the SEC63 2 domain.

The protein belongs to the helicase family. In terms of assembly, identified in the ASCC complex that contains ASCC1, ASCC2 and ASCC3. Functions as a scaffolding subunit that interacts directly with both ASCC1 and ASCC2. Interacts directly with ALKBH3, and thereby recruits ALKBH3 to the ASCC complex. Part of the ASC-1/TRIP4 complex, that contains TRIP4, ASCC1, ASCC2 and ASCC3. Part of the RQT (ribosome quality control trigger) complex, that contains ASCC2, ASCC3 and TRIP4. Associates with ribosomes; recruited to collided ribosomes. Interacts with ZCCHC4. Interacts with ZNF598. Interacts with RPS3.

It localises to the nucleus. Its subcellular location is the nucleus speckle. The protein resides in the cytoplasm. The protein localises to the cytosol. It carries out the reaction Couples ATP hydrolysis with the unwinding of duplex DNA by translocating in the 3'-5' direction.. The catalysed reaction is ATP + H2O = ADP + phosphate + H(+). In terms of biological role, ATPase involved both in DNA repair and rescue of stalled ribosomes. 3'-5' DNA helicase involved in repair of alkylated DNA: promotes DNA unwinding to generate single-stranded substrate needed for ALKBH3, enabling ALKBH3 to process alkylated N3-methylcytosine (3mC) within double-stranded regions. Also involved in activation of the ribosome quality control (RQC) pathway, a pathway that degrades nascent peptide chains during problematic translation. Drives the splitting of stalled ribosomes that are ubiquitinated in a ZNF598-dependent manner, as part of the ribosome quality control trigger (RQT) complex. Part of the ASC-1 complex that enhances NF-kappa-B, SRF and AP1 transactivation. This is Activating signal cointegrator 1 complex subunit 3 (ascc3) from Bos taurus (Bovine).